A 149-amino-acid chain; its full sequence is MFDGIGFMELLLIGVLGLIVLGPERLPVAVRSVTSWVRAMKRMANSVKEELEQELKIEQLHADLKKAESKGLSNLSPELQESIEQLKQAAQSVNRPYQVQDTPSAQDNQIHNPASQTVSTEASSTSASSAPKSESIQGEDPRSNTKANG.

The helical transmembrane segment at M1–G22 threads the bilayer. The segment covering L86–P113 has biased composition (polar residues). The tract at residues L86–G149 is disordered. A compositionally biased stretch (low complexity) spans A114–S135.

The protein belongs to the TatB family. In terms of assembly, the Tat system comprises two distinct complexes: a TatABC complex, containing multiple copies of TatA, TatB and TatC subunits, and a separate TatA complex, containing only TatA subunits. Substrates initially bind to the TatABC complex, which probably triggers association of the separate TatA complex to form the active translocon.

Its subcellular location is the cell inner membrane. Functionally, part of the twin-arginine translocation (Tat) system that transports large folded proteins containing a characteristic twin-arginine motif in their signal peptide across membranes. Together with TatC, TatB is part of a receptor directly interacting with Tat signal peptides. TatB may form an oligomeric binding site that transiently accommodates folded Tat precursor proteins before their translocation. This Shewanella oneidensis (strain ATCC 700550 / JCM 31522 / CIP 106686 / LMG 19005 / NCIMB 14063 / MR-1) protein is Sec-independent protein translocase protein TatB.